The chain runs to 1145 residues: DNA-directed RNA polymerase subunit beta (1145 aa).

Residues 1101–1112 (LPEERRVSSSKE) are compositionally biased toward basic and acidic residues. Positions 1101–1145 (LPEERRVSSSKEEIEEEEEVEDNSDEFDETFLEEAEDDFSLDDED) are disordered. Residues 1113-1145 (EIEEEEEVEDNSDEFDETFLEEAEDDFSLDDED) show a composition bias toward acidic residues.

It belongs to the RNA polymerase beta chain family. The RNAP catalytic core consists of 2 alpha, 1 beta, 1 beta' and 1 omega subunit. When a sigma factor is associated with the core the holoenzyme is formed, which can initiate transcription.

The enzyme catalyses RNA(n) + a ribonucleoside 5'-triphosphate = RNA(n+1) + diphosphate. Functionally, DNA-dependent RNA polymerase catalyzes the transcription of DNA into RNA using the four ribonucleoside triphosphates as substrates. In Desulforamulus reducens (strain ATCC BAA-1160 / DSM 100696 / MI-1) (Desulfotomaculum reducens), this protein is DNA-directed RNA polymerase subunit beta.